A 439-amino-acid polypeptide reads, in one-letter code: NAD-dependent malic enzyme 1 (439 aa).

Positions 9–84 (TLMIETPSVP…GIRLHTVSDE (76 aa)) constitute an ACT domain. Residue Tyr-112 is the Proton donor of the active site. Lys-167 functions as the Proton acceptor in the catalytic mechanism. Residues Glu-209, Asp-210, and Asp-235 each coordinate a divalent metal cation. Residues 268–271 (LGAA), Asn-347, and Asn-373 each bind NAD(+).

Belongs to the malic enzymes family. It depends on Mg(2+) as a cofactor. Requires Mn(2+) as cofactor.

The catalysed reaction is (S)-malate + NAD(+) = pyruvate + CO2 + NADH. The enzyme catalyses oxaloacetate + H(+) = pyruvate + CO2. Its function is as follows. Catalyzes the decarboxylation of malate to pyruvate. Is specific for NAD, cannot use NADP. Can also catalyze the decarboxylation of oxaloacetate. Involved in keeping the ATP levels high. This chain is NAD-dependent malic enzyme 1, found in Bacillus subtilis (strain 168).